The following is a 2475-amino-acid chain: Non-reducing polyketide synthase ausA (2475 aa).

Residues 14 to 253 (VLFGSKYSEI…HHADHLSAAQ (240 aa)) form an N-terminal acylcarrier protein transacylase domain (SAT) region. Residues 384–800 (SIPIAVTGLA…GSNAAIVLKE (417 aa)) enclose the Ketosynthase family 3 (KS3) domain. Residues cysteine 549, histidine 684, and histidine 723 each act as for beta-ketoacyl synthase activity in the active site. Positions 910 to 1212 (LCFGGQTGNK…CPMDLSGPQA (303 aa)) are malonyl-CoA:ACP transacylase (MAT) domain. Catalysis depends on serine 997, which acts as the For acyl/malonyl transferase activity. The interval 1279 to 1407 (EDLKLVQLLK…GTISLSPGAD (129 aa)) is N-terminal hotdog fold. The region spanning 1279–1586 (EDLKLVQLLK…FTSVSIQSLR (308 aa)) is the PKS/mFAS DH domain. The interval 1282–1585 (KLVQLLKNEG…TFTSVSIQSL (304 aa)) is product template (PT) domain. Histidine 1312 serves as the catalytic Proton acceptor; for dehydratase activity. A C-terminal hotdog fold region spans residues 1435–1586 (SSSGLKRSTV…FTSVSIQSLR (152 aa)). The active-site Proton donor; for dehydratase activity is the aspartate 1493. The Carrier domain maps to 1626-1703 (SSNGDDLRTV…ALVQRIFPGR (78 aa)). The residue at position 1663 (serine 1663) is an O-(pantetheine 4'-phosphoryl)serine. The tract at residues 1865–2098 (QHTSEHKLLH…GFNWVDWTDN (234 aa)) is methyltransferase (CMeT) domain. The interval 2127–2475 (SAIHEETVVY…YEFLRSHVGL (349 aa)) is thioesterase (TE) domain. Residues serine 2250, aspartate 2412, and histidine 2444 each act as for thioesterase activity in the active site.

The enzyme catalyses 3 malonyl-CoA + acetyl-CoA + 2 S-adenosyl-L-methionine = 3,5-dimethylorsellinate + 2 S-adenosyl-L-homocysteine + 3 CO2 + 4 CoA. Its pathway is secondary metabolite biosynthesis; terpenoid biosynthesis. Functionally, non-reducing polyketide synthase; part of the gene cluster A that mediates the biosynthesis of the fungal meroterpenoid acetoxydehydroaustin. The first step of the pathway is the synthesis of 3,5-dimethylorsellinic acid by the polyketide synthase ausA. 3,5-dimethylorsellinic acid is then prenylated by the polyprenyl transferase ausN. Further epoxidation by the FAD-dependent monooxygenase ausM and cyclization by the probable terpene cyclase ausL lead to the formation of protoaustinoid A. Protoaustinoid A is then oxidized to spiro-lactone preaustinoid A3 by the combined action of the FAD-binding monooxygenases ausB and ausC, and the dioxygenase ausE. Acid-catalyzed keto-rearrangement and ring contraction of the tetraketide portion of preaustinoid A3 by ausJ lead to the formation of preaustinoid A4. The aldo-keto reductase ausK, with the help of ausH, is involved in the next step by transforming preaustinoid A4 into isoaustinone which is in turn hydroxylated by the P450 monooxygenase ausI to form austinolide. The cytochrome P450 monooxygenase ausG then modifies austinolide to austinol. Austinol is further acetylated to austin by the O-acetyltransferase ausP, which spontaneously changes to dehydroaustin. The cytochrome P450 monooxygenase then converts dehydroaustin is into 7-dehydrodehydroaustin. The hydroxylation catalyzed by ausR permits the second O-acetyltransferase ausQ to add an additional acetyl group to the molecule, leading to the formation of acetoxydehydroaustin. Due to genetic rearrangements of the clusters and the subsequent loss of some enzymes, the end product of the Penicillium brasilianum austinoid biosynthesis clusters is acetoxydehydroaustin. The polypeptide is Non-reducing polyketide synthase ausA (Penicillium brasilianum).